The following is a 452-amino-acid chain: Tubulin alpha-2/alpha-4 chain (452 aa).

Q11 contacts GTP. Position 40 is an N6-acetyllysine (K40). Positions 71, 140, 144, 145, 179, 206, and 228 each coordinate GTP. E71 lines the Mg(2+) pocket. The active site involves E254. Residues 432 to 452 form a disordered region; sequence YEEVGVDSVEGEGEEEGGEEY.

The protein belongs to the tubulin family. As to quaternary structure, dimer of alpha and beta chains. A typical microtubule is a hollow water-filled tube with an outer diameter of 25 nm and an inner diameter of 15 nM. Alpha-beta heterodimers associate head-to-tail to form protofilaments running lengthwise along the microtubule wall with the beta-tubulin subunit facing the microtubule plus end conferring a structural polarity. Microtubules usually have 13 protofilaments but different protofilament numbers can be found in some organisms and specialized cells. Requires Mg(2+) as cofactor. In terms of processing, undergoes a tyrosination/detyrosination cycle, the cyclic removal and re-addition of a C-terminal tyrosine residue by the enzymes tubulin tyrosine carboxypeptidase (TTCP) and tubulin tyrosine ligase (TTL), respectively. Post-translationally, acetylation of alpha chains at Lys-40 stabilizes microtubules and affects affinity and processivity of microtubule motors. This modification has a role in multiple cellular functions, ranging from cell motility, cell cycle progression or cell differentiation to intracellular trafficking and signaling.

It localises to the cytoplasm. It is found in the cytoskeleton. The catalysed reaction is GTP + H2O = GDP + phosphate + H(+). Functionally, tubulin is the major constituent of microtubules, a cylinder consisting of laterally associated linear protofilaments composed of alpha- and beta-tubulin heterodimers. Microtubules grow by the addition of GTP-tubulin dimers to the microtubule end, where a stabilizing cap forms. Below the cap, tubulin dimers are in GDP-bound state, owing to GTPase activity of alpha-tubulin. This is Tubulin alpha-2/alpha-4 chain (TUB2) from Patella vulgata (Common limpet).